Consider the following 205-residue polypeptide: High frequency lysogenization protein HflD homolog (205 aa).

The protein belongs to the HflD family.

The protein resides in the cytoplasm. Its subcellular location is the cell inner membrane. This chain is High frequency lysogenization protein HflD homolog, found in Alkalilimnicola ehrlichii (strain ATCC BAA-1101 / DSM 17681 / MLHE-1).